Reading from the N-terminus, the 650-residue chain is DNA gyrase subunit B (650 aa).

The Toprim domain maps to 429–543 (NELFIVEGDS…AGYVYIAQPP (115 aa)). Residues glutamate 435, aspartate 508, and aspartate 510 each coordinate Mg(2+).

The protein belongs to the type II topoisomerase GyrB family. In terms of assembly, heterotetramer, composed of two GyrA and two GyrB chains. In the heterotetramer, GyrA contains the active site tyrosine that forms a transient covalent intermediate with DNA, while GyrB binds cofactors and catalyzes ATP hydrolysis. Requires Mg(2+) as cofactor. Mn(2+) serves as cofactor. It depends on Ca(2+) as a cofactor.

The protein localises to the cytoplasm. The enzyme catalyses ATP-dependent breakage, passage and rejoining of double-stranded DNA.. Functionally, a type II topoisomerase that negatively supercoils closed circular double-stranded (ds) DNA in an ATP-dependent manner to modulate DNA topology and maintain chromosomes in an underwound state. Negative supercoiling favors strand separation, and DNA replication, transcription, recombination and repair, all of which involve strand separation. Also able to catalyze the interconversion of other topological isomers of dsDNA rings, including catenanes and knotted rings. Type II topoisomerases break and join 2 DNA strands simultaneously in an ATP-dependent manner. In Streptococcus pyogenes serotype M3 (strain ATCC BAA-595 / MGAS315), this protein is DNA gyrase subunit B.